Here is a 737-residue protein sequence, read N- to C-terminus: UPF0507 protein YML002W (737 aa).

One can recognise a VPS9 domain in the interval Met-1–Asn-83.

It belongs to the UPF0507 family.

This chain is UPF0507 protein YML002W, found in Saccharomyces cerevisiae (strain ATCC 204508 / S288c) (Baker's yeast).